Reading from the N-terminus, the 294-residue chain is Bifunctional protein FolD (294 aa).

NADP(+) contacts are provided by residues 166–168 (GRS), S191, and I232.

This sequence belongs to the tetrahydrofolate dehydrogenase/cyclohydrolase family. In terms of assembly, homodimer.

The catalysed reaction is (6R)-5,10-methylene-5,6,7,8-tetrahydrofolate + NADP(+) = (6R)-5,10-methenyltetrahydrofolate + NADPH. It carries out the reaction (6R)-5,10-methenyltetrahydrofolate + H2O = (6R)-10-formyltetrahydrofolate + H(+). The protein operates within one-carbon metabolism; tetrahydrofolate interconversion. In terms of biological role, catalyzes the oxidation of 5,10-methylenetetrahydrofolate to 5,10-methenyltetrahydrofolate and then the hydrolysis of 5,10-methenyltetrahydrofolate to 10-formyltetrahydrofolate. The protein is Bifunctional protein FolD of Nitrobacter hamburgensis (strain DSM 10229 / NCIMB 13809 / X14).